The sequence spans 278 residues: Troponin T, slow skeletal muscle (278 aa).

Residues 1–37 are compositionally biased toward acidic residues; sequence MSDTEEQEYEEEQPEEEAAEEEEEAPEEPEPVAEPEE. Disordered stretches follow at residues 1-63 and 105-153; these read MSDT…RVDF and RRRS…KKKV. Position 2 is a phosphoserine; by CK2 (Ser-2). Residues 43–55 show a composition bias toward pro residues; that stretch reads SRPVVPPLIPPKI. The segment covering 105 to 149 has biased composition (basic and acidic residues); the sequence is RRRSERAEQQRFRTEKERERQAKLAEEKMRKEEEEAKKRAEDDAK.

The protein belongs to the troponin T family. As to quaternary structure, interacts with TPM3.

In terms of biological role, troponin T is the tropomyosin-binding subunit of troponin, the thin filament regulatory complex which confers calcium-sensitivity to striated muscle actomyosin ATPase activity. In Homo sapiens (Human), this protein is Troponin T, slow skeletal muscle (TNNT1).